We begin with the raw amino-acid sequence, 407 residues long: Zinc finger protein 174 (407 aa).

The tract at residues 1-20 (MAAKMEITLSSNTEASSKQE) is disordered. A Glycyl lysine isopeptide (Lys-Gly) (interchain with G-Cter in SUMO2) cross-link involves residue lysine 26. An SCAN box domain is found at 59–124 (GPQEALSQLR…KEIVTLVEDF (66 aa)). The disordered stretch occupies residues 150–270 (GSQLGEQELP…RRQVSSPNAQ (121 aa)). A Glycyl lysine isopeptide (Lys-Gly) (interchain with G-Cter in SUMO2) cross-link involves residue lysine 204. Residues 211–221 (PRMRSDNKENP) are compositionally biased toward basic and acidic residues. Residues lysine 230 and lysine 271 each participate in a glycyl lysine isopeptide (Lys-Gly) (interchain with G-Cter in SUMO2) cross-link. 3 C2H2-type zinc fingers span residues 326–348 (YKCD…KRVH), 354–376 (YTCG…QRIH), and 382–405 (YQCG…RLHH).

It belongs to the krueppel C2H2-type zinc-finger protein family. As to quaternary structure, homodimer. As to expression, expressed in a variety of organs, but most strongly in adult testis and ovary followed by small intestine, colon, prostate, thymus, spleen, pancreas, skeletal muscle, heart, brain and kidney. Also expressed in umbilical vein endothelial cells, foreskin fibroblast and Hep-G2 cells.

Its subcellular location is the nucleus. Transcriptional repressor. The chain is Zinc finger protein 174 (ZNF174) from Homo sapiens (Human).